We begin with the raw amino-acid sequence, 398 residues long: Phosphoglycerate kinase (398 aa).

Residues 21–23, Arg-36, 59–62, Arg-117, and Arg-150 contribute to the substrate site; these read DFN and HFGR. ATP is bound by residues Lys-200, Glu-321, and 351 to 354; that span reads GGDS.

Belongs to the phosphoglycerate kinase family. In terms of assembly, monomer.

The protein resides in the cytoplasm. It carries out the reaction (2R)-3-phosphoglycerate + ATP = (2R)-3-phospho-glyceroyl phosphate + ADP. The protein operates within carbohydrate degradation; glycolysis; pyruvate from D-glyceraldehyde 3-phosphate: step 2/5. In Wolbachia sp. subsp. Drosophila simulans (strain wRi), this protein is Phosphoglycerate kinase.